Consider the following 605-residue polypeptide: Kelch-like protein 41b (605 aa).

One can recognise a BTB domain in the interval 32–102; the sequence is VDCTLKIGDR…YSAEIDLVDD (71 aa). The BACK domain occupies 136–238; that stretch reads CLAVFRLGLV…PEKYFREKVE (103 aa). Kelch repeat units lie at residues 345–397, 398–446, 447–494, 496–541, and 543–598; these read QLFI…ESEN, LLFA…SHNN, LVYC…VHKG, IIVT…SSGG, and LFSI…MRLN.

It localises to the cytoplasm. The protein resides in the cytoskeleton. Its subcellular location is the sarcoplasmic reticulum membrane. It is found in the endoplasmic reticulum membrane. Its function is as follows. Involved in skeletal muscle development and maintenance. This chain is Kelch-like protein 41b, found in Danio rerio (Zebrafish).